The primary structure comprises 901 residues: PGC-1 and ERR-induced regulator in muscle protein 1 (901 aa).

Disordered stretches follow at residues 29 to 511, 564 to 671, and 731 to 752; these read QAGL…MPAS, SLEG…MGPG, and RHQE…APPP. A compositionally biased stretch (polar residues) spans 100–112; that stretch reads GQQTPSTSAQSEA. Residues 157-178 are compositionally biased toward low complexity; sequence GEPAGSPESPVHSAAPQRSPGS. 5 stretches are compositionally biased toward polar residues: residues 267–276, 347–379, 387–418, 426–457, and 465–484; these read LSTSVSTTEQ, DESQ…QSTP, EPQS…QSTP, and EPQS…STPT. The span at 608–624 shows a compositional bias: low complexity; the sequence is PSSEEPGSGEVSGPLSP.

Its subcellular location is the cytoplasm. It localises to the nucleus. In terms of biological role, regulates the expression of selective PPARGC1A/B and ESRRA/B/G target genes with roles in glucose and lipid metabolism, energy transfer, contractile function, muscle mitochondrial biogenesis and oxidative capacity. Required for the efficient induction of MT-CO2, MT-CO3, COX4I1, TFB1M, TFB2M, POLRMT and SIRT3 by PPARGC1A. Positively regulates the PPARGC1A/ESRRG-induced expression of CKMT2, TNNI3 and SLC2A4 and negatively regulates the PPARGC1A/ESRRG-induced expression of PDK4. In Bos taurus (Bovine), this protein is PGC-1 and ERR-induced regulator in muscle protein 1 (PERM1).